The following is a 1498-amino-acid chain: Rap guanine nucleotide exchange factor 2 (1498 aa).

Disordered stretches follow at residues 40 to 59 (HVSS…SSSL) and 68 to 101 (SEAG…SDPL). The segment covering 83-94 (VDSEDDDDEEDI) has biased composition (acidic residues). Position 135–252 (135–252 (AFANMTMSVR…QKVEEEGEIV (118 aa))) interacts with a nucleoside 3',5'-cyclic phosphate. The N-terminal Ras-GEF domain maps to 267–380 (KGHIVIKGTS…RLLNIACAAK (114 aa)). Positions 385–468 (LMTLTKPSRE…LSITVKTNLF (84 aa)) constitute a PDZ domain. Serine 501 bears the Phosphoserine mark. One can recognise a Ras-associating domain in the interval 606 to 692 (PDQVLRVFKA…GRYYLKNNME (87 aa)). Threonine 644 carries the post-translational modification Phosphothreonine. The region spanning 717–944 (STVEVATQLS…SQGSTNATVL (228 aa)) is the Ras-GEF domain. Residues serine 806, serine 930, serine 933, serine 1022, serine 1079, serine 1088, serine 1094, serine 1115, serine 1119, serine 1158, and serine 1175 each carry the phosphoserine modification. The tract at residues 1002 to 1048 (PATNTLPKNPGDKKPVKSETSPVAPRAGSQQKAQAQPPPPQPQPQHK) is disordered. The tract at residues 1094–1159 (SLERHKKQAE…RSSIVSNSSF (66 aa)) is disordered. Low complexity-rich tracts occupy residues 1110-1124 (SSQL…QSSP) and 1140-1159 (SDSG…NSSF). 3 disordered regions span residues 1224–1257 (STEE…GSHD), 1304–1371 (TKYN…TKPV), and 1392–1498 (EGRY…VSAV). 2 stretches are compositionally biased toward polar residues: residues 1246 to 1257 (GSWTSCSSGSHD) and 1306 to 1330 (YNRQ…SSTG). Positions 1354-1365 (EAESSSVTSVTT) are enriched in low complexity. Residues 1487–1498 (TEEDEDEQVSAV) show a composition bias toward acidic residues.

The protein belongs to the RAPGEF2 family. In terms of assembly, found in a complex, at least composed of KIDINS220, MAGI2, NTRK1 and RAPGEF2; the complex is mainly formed at late endosomes in a neuronal growth factor (NGF)-dependent manner. Interacts (via C-terminal domain) with NEDD4 (via WW domains); this interaction leads to ubiquitination and degradation via the proteasome pathway in a cAMP-independent manner. Interacts with MAGI1 (via PDZ domain). Interacts with ADRB1 (via C-terminal PDZ motif); the interaction is direct. Interacts (via Ras-associating domain) with RAP1A (via GTP-bound active form). Interacts weakly with HRAS (via GDP- and GTP-bound forms). Interacts (via C-terminal domain) with MAGI2 (via PDZ and WW domains). Interacts with CDH1, CTNNB1 and TJP1. Post-translationally, ubiquitinated by NEDD4, leading to proteasomal degradation. Phosphorylation by PLK2 promotes its activity.

It is found in the cell junction. The protein localises to the cytoplasm. The protein resides in the perinuclear region. It localises to the cell membrane. Its subcellular location is the late endosome. Its function is as follows. Functions as a guanine nucleotide exchange factor (GEF), which activates Rap and Ras family of small GTPases by exchanging bound GDP for free GTP in a cAMP-dependent manner. Serves as a link between cell surface receptors and Rap/Ras GTPases in intracellular signaling cascades. Also acts as an effector for Rap1 by direct association with Rap1-GTP thereby leading to the amplification of Rap1-mediated signaling. Shows weak activity on HRAS. It is controversial whether RAPGEF2 binds cAMP and cGMP or not. Its binding to ligand-activated beta-1 adrenergic receptor ADRB1 leads to the Ras activation through the G(s)-alpha signaling pathway. Involved in the cAMP-induced Ras and Erk1/2 signaling pathway that leads to sustained inhibition of long term melanogenesis by reducing dendrite extension and melanin synthesis. Also provides inhibitory signals for cell proliferation of melanoma cells and promotes their apoptosis in a cAMP-independent nanner. Regulates cAMP-induced neuritogenesis by mediating the Rap1/B-Raf/ERK signaling through a pathway that is independent on both PKA and RAPGEF3/RAPGEF4. Involved in neuron migration and in the formation of the major forebrain fiber connections forming the corpus callosum, the anterior commissure and the hippocampal commissure during brain development. Involved in neuronal growth factor (NGF)-induced sustained activation of Rap1 at late endosomes and in brain-derived neurotrophic factor (BDNF)-induced axon outgrowth of hippocampal neurons. Plays a role in the regulation of embryonic blood vessel formation and in the establishment of basal junction integrity and endothelial barrier function. May be involved in the regulation of the vascular endothelial growth factor receptor KDR and cadherin CDH5 expression at allantois endothelial cell-cell junctions. The sequence is that of Rap guanine nucleotide exchange factor 2 (RAPGEF2) from Canis lupus familiaris (Dog).